Reading from the N-terminus, the 642-residue chain is Assimilatory sulfite reductase (ferredoxin), chloroplastic (642 aa).

A chloroplast-targeting transit peptide spans 1–61 (MSSTFRAPAG…SSSSSSPIQA (61 aa)). The segment at 46–74 (PVPPSASSSSSSPIQAVSTPAKPETATKR) is disordered. Residues Cys-503, Cys-509, Cys-549, and Cys-553 each contribute to the [4Fe-4S] cluster site. Position 553 (Cys-553) interacts with siroheme.

The protein belongs to the nitrite and sulfite reductase 4Fe-4S domain family. Monomer. Interacts with ferredoxin. Siroheme is required as a cofactor. It depends on [4Fe-4S] cluster as a cofactor. Phosphorylated; this phosphorylation reduces DNA-binding. Present in leaves and roots.

It is found in the plastid. Its subcellular location is the chloroplast stroma. It localises to the chloroplast nucleoid. The protein resides in the plastid stroma. It carries out the reaction hydrogen sulfide + 6 oxidized [2Fe-2S]-[ferredoxin] + 3 H2O = sulfite + 6 reduced [2Fe-2S]-[ferredoxin] + 7 H(+). Functionally, essential protein with sulfite reductase activity required in assimilatory sulfate reduction pathway during both primary and secondary metabolism and thus involved in development and growth. In terms of biological role, DNA-binding protein that binds to both double-stranded and single-stranded DNA without significant sequence specificity to reversibly repress the transcriptional activity of chloroplast nucleoids by promoting DNA compaction and possibly regulate DNA replication. This chain is Assimilatory sulfite reductase (ferredoxin), chloroplastic (SIR), found in Arabidopsis thaliana (Mouse-ear cress).